The following is a 100-amino-acid chain: Large ribosomal subunit protein bL21 (100 aa).

It belongs to the bacterial ribosomal protein bL21 family. As to quaternary structure, part of the 50S ribosomal subunit. Contacts protein L20.

In terms of biological role, this protein binds to 23S rRNA in the presence of protein L20. The sequence is that of Large ribosomal subunit protein bL21 from Corynebacterium kroppenstedtii (strain DSM 44385 / JCM 11950 / CIP 105744 / CCUG 35717).